The following is a 144-amino-acid chain: Sentan (144 aa).

The disordered stretch occupies residues 1-31; sequence MCGCRASVPSTKHYSVNPAPTTRSPPAAAGM. A compositionally biased stretch (low complexity) spans 18–29; that stretch reads PAPTTRSPPAAA.

It belongs to the S-100 family.

The protein localises to the cell projection. It localises to the cilium. May be a component of the linker structure that bridges the ciliary membrane and peripheral singlet microtubules. The protein is Sentan of Gallus gallus (Chicken).